Reading from the N-terminus, the 181-residue chain is NADH-quinone oxidoreductase subunit I 2 (181 aa).

2 consecutive 4Fe-4S ferredoxin-type domains span residues L44–A74 and R90–D119. The [4Fe-4S] cluster site is built by C54, C57, C60, C64, C99, C102, C105, and C109.

Belongs to the complex I 23 kDa subunit family. NDH-1 is composed of 14 different subunits. Subunits NuoA, H, J, K, L, M, N constitute the membrane sector of the complex. Requires [4Fe-4S] cluster as cofactor.

The protein localises to the cell membrane. The enzyme catalyses a quinone + NADH + 5 H(+)(in) = a quinol + NAD(+) + 4 H(+)(out). Its function is as follows. NDH-1 shuttles electrons from NADH, via FMN and iron-sulfur (Fe-S) centers, to quinones in the respiratory chain. The immediate electron acceptor for the enzyme in this species is believed to be menaquinone. Couples the redox reaction to proton translocation (for every two electrons transferred, four hydrogen ions are translocated across the cytoplasmic membrane), and thus conserves the redox energy in a proton gradient. This is NADH-quinone oxidoreductase subunit I 2 from Mycolicibacterium paratuberculosis (strain ATCC BAA-968 / K-10) (Mycobacterium paratuberculosis).